Reading from the N-terminus, the 285-residue chain is Probable enoyl-CoA hydratase echA12 (285 aa).

The protein belongs to the enoyl-CoA hydratase/isomerase family.

The enzyme catalyses a (3S)-3-hydroxyacyl-CoA = a (2E)-enoyl-CoA + H2O. It catalyses the reaction a 4-saturated-(3S)-3-hydroxyacyl-CoA = a (3E)-enoyl-CoA + H2O. Functionally, could possibly oxidize fatty acids using specific components. This chain is Probable enoyl-CoA hydratase echA12 (echA12), found in Mycobacterium tuberculosis (strain CDC 1551 / Oshkosh).